The primary structure comprises 148 residues: uncharacterized protein (148 aa).

Residues 37–94 (NNNNYNNNNKNNNNNNNNNNNNNNNNNNNNNNNYINSCNSNNNNNNNNNNTKNNNINS) show a composition bias toward low complexity. A disordered region spans residues 37-99 (NNNNYNNNNK…NNINSRTDKN (63 aa)).

This is an uncharacterized protein from Dictyostelium discoideum (Social amoeba).